The following is a 327-amino-acid chain: Phenylalanine--tRNA ligase alpha subunit (327 aa).

E252 contributes to the Mg(2+) binding site.

It belongs to the class-II aminoacyl-tRNA synthetase family. Phe-tRNA synthetase alpha subunit type 1 subfamily. In terms of assembly, tetramer of two alpha and two beta subunits. Mg(2+) serves as cofactor.

The protein resides in the cytoplasm. The catalysed reaction is tRNA(Phe) + L-phenylalanine + ATP = L-phenylalanyl-tRNA(Phe) + AMP + diphosphate + H(+). In Yersinia enterocolitica serotype O:8 / biotype 1B (strain NCTC 13174 / 8081), this protein is Phenylalanine--tRNA ligase alpha subunit.